The following is a 266-amino-acid chain: CD82 antigen (266 aa).

The Cytoplasmic segment spans residues 1–11 (MGAGCVKVTKY). Cys-5 is lipidated: S-palmitoyl cysteine. Residues 12–32 (FLFLFNLLFFILGAVILGFGV) form a helical membrane-spanning segment. Residues 33-53 (WILADKNSFISVLQTSSSSLQ) lie on the Extracellular side of the membrane. The helical transmembrane segment at 54-72 (VGAYVFIGVGAITIVMGFL) threads the bilayer. The Cytoplasmic portion of the chain corresponds to 73 to 83 (GCIGAVNEVRC). Residue Cys-74 is the site of S-palmitoyl cysteine attachment. A helical transmembrane segment spans residues 84–110 (LLGLYFVFLLLILIAQVTVGVLFYFNA). Residues 111-227 (DKLKKEMGNT…KAQAWLQENF (117 aa)) are Extracellular-facing. Residues Asn-127, Asn-131, Asn-157, and Asn-197 are each glycosylated (N-linked (GlcNAc...) asparagine). The helical transmembrane segment at 228 to 249 (GILLGVCAGVAVIELLGLFLSI) threads the bilayer. Topologically, residues 250 to 266 (CLCRYIHSEDYSKVPKY) are cytoplasmic.

The protein belongs to the tetraspanin (TM4SF) family. Forms homooligomers. Interacts directly with IGSF8. Interacts with EGFR. Interacts with VEGFA and PDGFA. Interacts with ITGA4. Interacts with ITGA6; this interaction reduces ITGA6 cell surface expression. Interacts with ITGB1. Interacts with TLR4; this interaction inhibits TLR4-mediated signaling pathway. Interacts with TLR9. Interacts with PLAUR. Palmitoylated. Palmitoylation contributes to oligomerization and surface expression. Highest expression in the spleen and the kidney. Low expression in skeletal muscle and in the heart.

Its subcellular location is the cell membrane. The protein localises to the cytoplasmic vesicle. The protein resides in the phagosome. In terms of biological role, structural component of specialized membrane microdomains known as tetraspanin-enriched microdomains (TERMs), which act as platforms for receptor clustering and signaling. Participates thereby in diverse biological functions such as cell signal transduction, adhesion, migration and protein trafficking. Acts as a attenuator of EGF signaling, facilitating ligand-induced endocytosis of the receptor and its subsequent desensitization. Mechanistically, modulates ligand-induced ubiquitination and trafficking of EGFR via E3 ligase CBL phosphorylation by PKC. Increases cell-matrix adhesion by regulating the membrane organization of integrin alpha4/ITA4. Modulates adhesion and suppresses cell migration through other integrins such as the alpha6/ITGA6 and beta1/ITGB1. Decreases cell-associated plasminogen activation by interfering with the interaction between urokinase-type plasminogen activator/PLAU and its receptor PLAUR. Associates with CD4 or CD8 and delivers costimulatory signals for the TCR/CD3 pathway. Plays a role in the restrains phagocyte migration but supports macrophage activation. Plays a role in TLR9 trafficking to acidified CpG-containing compartments by controlling interaction between TLR9 and VAMP3 and subsequent myddosome assembly. Inhibits LPS-induced inflammatory response by preventing binding of LPS to TLR4 on the cell surface. Plays a role in the activation of macrophages into anti-inflammatory phenotypes. Independently of Toll-like receptor (TLR) signaling, is recruited to pathogen-containing phagosomes prior to fusion with lysosomes and participates in antigen presentation. Also acts to control angiogenesis and switch angiogenic milieu to quiescent state by binding and sequestering VEGFA and PDGFA to inhibit the signaling they trigger via their respective cell surface receptor. In Mus musculus (Mouse), this protein is CD82 antigen (Cd82).